Consider the following 96-residue polypeptide: Large ribosomal subunit protein eL30 (96 aa).

The protein belongs to the eukaryotic ribosomal protein eL30 family.

In Methanosphaerula palustris (strain ATCC BAA-1556 / DSM 19958 / E1-9c), this protein is Large ribosomal subunit protein eL30.